Reading from the N-terminus, the 726-residue chain is Catalase-peroxidase (726 aa).

The disordered stretch occupies residues 1–25; it reads MDAKTDDSAGKCPFTGGGRRGHRNR. A cross-link (tryptophyl-tyrosyl-methioninium (Trp-Tyr) (with M-244)) is located at residues 96–218; that stretch reads WHSAGTYRIT…LAAVQMGLIY (123 aa). The active-site Proton acceptor is the His97. A cross-link (tryptophyl-tyrosyl-methioninium (Tyr-Met) (with W-96)) is located at residues 218 to 244; sequence YVNPEGPNGNPDPVAAAKDIRETFYRM. His259 provides a ligand contact to heme b.

This sequence belongs to the peroxidase family. Peroxidase/catalase subfamily. As to quaternary structure, homodimer or homotetramer. Heme b serves as cofactor. In terms of processing, formation of the three residue Trp-Tyr-Met cross-link is important for the catalase, but not the peroxidase activity of the enzyme.

It catalyses the reaction H2O2 + AH2 = A + 2 H2O. It carries out the reaction 2 H2O2 = O2 + 2 H2O. Functionally, bifunctional enzyme with both catalase and broad-spectrum peroxidase activity. This chain is Catalase-peroxidase, found in Chelativorans sp. (strain BNC1).